The sequence spans 915 residues: Rab3 GTPase-activating protein catalytic subunit (915 aa).

This sequence belongs to the Rab3-GAP catalytic subunit family. The Rab3 GTPase-activating complex is a heterodimer composed of rbg-1 and rbg-2.

The protein resides in the cytoplasm. Its function is as follows. Probable catalytic subunit of a GTPase activating protein that has specificity for Rab3 subfamily. Rab3 proteins are involved in regulated exocytosis of neurotransmitters and hormones. Specifically converts active Rab3-GTP to the inactive form Rab3-GDP. This Caenorhabditis elegans protein is Rab3 GTPase-activating protein catalytic subunit (rbg-1).